A 360-amino-acid chain; its full sequence is Photosystem II protein D1 (360 aa).

The next 3 helical transmembrane spans lie at 29-46 (YVGW…TATT), 118-133 (HFLL…QWEL), and 142-156 (WICV…AATA). Residue His118 participates in chlorophyll a binding. Tyr126 serves as a coordination point for pheophytin a. Asp170 and Glu189 together coordinate [CaMn4O5] cluster. The chain crosses the membrane as a helical span at residues 197-218 (FHMLGVAGVFGGSLFSAMHGSL). Chlorophyll a is bound at residue His198. A quinone contacts are provided by residues His215 and 264–265 (SF). His215 contacts Fe cation. A Fe cation-binding site is contributed by His272. Residues 274–288 (FLGAWPVIGIWFTAM) traverse the membrane as a helical segment. 4 residues coordinate [CaMn4O5] cluster: His332, Glu333, Asp342, and Ala344. The propeptide occupies 345–360 (SGEQAPVALTAPAING).

The protein belongs to the reaction center PufL/M/PsbA/D family. PSII is composed of 1 copy each of membrane proteins PsbA, PsbB, PsbC, PsbD, PsbE, PsbF, PsbH, PsbI, PsbJ, PsbK, PsbL, PsbM, PsbT, PsbX, PsbY, PsbZ, Psb30/Ycf12, peripheral proteins PsbO, CyanoQ (PsbQ), PsbU, PsbV and a large number of cofactors. It forms dimeric complexes. The D1/D2 heterodimer binds P680, chlorophylls that are the primary electron donor of PSII, and subsequent electron acceptors. It shares a non-heme iron and each subunit binds pheophytin, quinone, additional chlorophylls, carotenoids and lipids. D1 provides most of the ligands for the Mn4-Ca-O5 cluster of the oxygen-evolving complex (OEC). There is also a Cl(-1) ion associated with D1 and D2, which is required for oxygen evolution. The PSII complex binds additional chlorophylls, carotenoids and specific lipids. is required as a cofactor. In terms of processing, tyr-161 forms a radical intermediate that is referred to as redox-active TyrZ, YZ or Y-Z. C-terminally processed by CtpA; processing is essential to allow assembly of the oxygen-evolving complex and thus photosynthetic growth.

It localises to the cellular thylakoid membrane. The catalysed reaction is 2 a plastoquinone + 4 hnu + 2 H2O = 2 a plastoquinol + O2. Functionally, photosystem II (PSII) is a light-driven water:plastoquinone oxidoreductase that uses light energy to abstract electrons from H(2)O, generating O(2) and a proton gradient subsequently used for ATP formation. It consists of a core antenna complex that captures photons, and an electron transfer chain that converts photonic excitation into a charge separation. The D1/D2 (PsbA/PsbD) reaction center heterodimer binds P680, the primary electron donor of PSII as well as several subsequent electron acceptors. The sequence is that of Photosystem II protein D1 from Microcystis aeruginosa.